The sequence spans 337 residues: Ketol-acid reductoisomerase (NADP(+)) (337 aa).

Residues 3-183 (IDVFYDDDAD…GGGRAGVIPT (181 aa)) form the KARI N-terminal Rossmann domain. NADP(+)-binding positions include 26–29 (YGSQ), Arg-49, Ser-52, Ser-54, and 84–87 (DTSQ). Residue His-109 is part of the active site. Gly-135 provides a ligand contact to NADP(+). The region spanning 184 to 329 (TFEAETVTDL…EKLRDLMSWV (146 aa)) is the KARI C-terminal knotted domain. The Mg(2+) site is built by Asp-192, Glu-196, Glu-228, and Glu-232. Ser-253 is a substrate binding site.

Belongs to the ketol-acid reductoisomerase family. The cofactor is Mg(2+).

It catalyses the reaction (2R)-2,3-dihydroxy-3-methylbutanoate + NADP(+) = (2S)-2-acetolactate + NADPH + H(+). The catalysed reaction is (2R,3R)-2,3-dihydroxy-3-methylpentanoate + NADP(+) = (S)-2-ethyl-2-hydroxy-3-oxobutanoate + NADPH + H(+). Its pathway is amino-acid biosynthesis; L-isoleucine biosynthesis; L-isoleucine from 2-oxobutanoate: step 2/4. The protein operates within amino-acid biosynthesis; L-valine biosynthesis; L-valine from pyruvate: step 2/4. Involved in the biosynthesis of branched-chain amino acids (BCAA). Catalyzes an alkyl-migration followed by a ketol-acid reduction of (S)-2-acetolactate (S2AL) to yield (R)-2,3-dihydroxy-isovalerate. In the isomerase reaction, S2AL is rearranged via a Mg-dependent methyl migration to produce 3-hydroxy-3-methyl-2-ketobutyrate (HMKB). In the reductase reaction, this 2-ketoacid undergoes a metal-dependent reduction by NADPH to yield (R)-2,3-dihydroxy-isovalerate. This chain is Ketol-acid reductoisomerase (NADP(+)), found in Corynebacterium urealyticum (strain ATCC 43042 / DSM 7109).